The primary structure comprises 1047 residues: Exportin-6 (1047 aa).

One can recognise an Importin N-terminal domain in the interval 32-98 (IDTILNNYKA…KGLLLDIYLN (67 aa)).

This sequence belongs to the exportin family.

Its subcellular location is the nucleus. It is found in the cytoplasm. Its function is as follows. Probably mediates the nuclear export of actin and profilin-actin complexes. In Dictyostelium discoideum (Social amoeba), this protein is Exportin-6 (xpo6).